The primary structure comprises 71 residues: Large ribosomal subunit protein bL31 (71 aa).

The Zn(2+) site is built by C16, C18, C36, and C39.

This sequence belongs to the bacterial ribosomal protein bL31 family. Type A subfamily. In terms of assembly, part of the 50S ribosomal subunit. Zn(2+) serves as cofactor.

Its function is as follows. Binds the 23S rRNA. The chain is Large ribosomal subunit protein bL31 from Petrotoga mobilis (strain DSM 10674 / SJ95).